We begin with the raw amino-acid sequence, 303 residues long: Taste receptor type 2 member 13 (303 aa).

At 1-7 (MKSALPS) the chain is on the extracellular side. The helical transmembrane segment at 8-28 (IFTLVIIAEFIIGNLSNGFIV) threads the bilayer. At 29 to 55 (LINCIDWVSKRELSSVDKLLIILAISR) the chain is on the cytoplasmic side. Residues 56 to 76 (IGLIWEILVSWFLALHYLAIF) traverse the membrane as a helical segment. Over 77–85 (VSGTGLRIM) the chain is Extracellular. A helical transmembrane segment spans residues 86–106 (IFSWIVSNHFNLWLATILSIF). Topologically, residues 107-128 (YLLKIASFSSPAFLYLKWRVNK) are cytoplasmic. A helical transmembrane segment spans residues 129-149 (VILLILLGTLVFLFLNLIQIN). The Extracellular portion of the chain corresponds to 150–184 (MHIKDWLDRYERNTTWNFSMSDFETFSVSVKFTMT). N-linked (GlcNAc...) asparagine glycans are attached at residues N162 and N166. A helical membrane pass occupies residues 185 to 205 (MFSLTPFTVAFISFLLLIFSL). At 206-232 (QKHLQKMQLNYKGHRDPKTKVHTNALK) the chain is on the cytoplasmic side. A helical membrane pass occupies residues 233 to 253 (IVISFLLFYASFFLCVLXSWI). Residues 254-261 (SELYQNTV) lie on the Extracellular side of the membrane. Residues 262 to 282 (IYMLCETIGVFYPSSHSFLLI) traverse the membrane as a helical segment. Topologically, residues 283–303 (LGNAKLRQAFLLVAAKVWAKR) are cytoplasmic.

The protein belongs to the G-protein coupled receptor T2R family.

The protein resides in the membrane. In terms of biological role, receptor that may play a role in the perception of bitterness and is gustducin-linked. May play a role in sensing the chemical composition of the gastrointestinal content. The activity of this receptor may stimulate alpha gustducin, mediate PLC-beta-2 activation and lead to the gating of TRPM5. The polypeptide is Taste receptor type 2 member 13 (TAS2R13) (Gorilla gorilla gorilla (Western lowland gorilla)).